The primary structure comprises 375 residues: MSQPKRRKLESGGGGEGGEGTEEEDGGELEVAVPRPRRTRRERDQLYYQCYSDVSVHEEMIADRVRTDAYRLGILRNWAALRGKTVLDVGAGTGILSIFCAQAGARRVYAVEASDIWQQAREVVRLNGLEDRVHVLPGPVETVELPEQVDAIVSEWMGCGLLHESMLSSVLHARTKWLKEGGLLLPASAELFVAPISDQMLELRLSFWSQMKQLYGVDMSCLESFATRCLMGHSEIVVQGLSGEDVLARPQCFARLELARAGLEQELEAGVGGRFRFSCYGSAPMHGFAIWFQVTFPGGDSEKPVVLSTSPFHPVTHWKQALLYLNEPVQVEQDTDVSGEITLLPSQDHHRHLRVLLRYKVGDQEEKTKDFAMED.

The disordered stretch occupies residues 1-36 (MSQPKRRKLESGGGGEGGEGTEEEDGGELEVAVPRP). A compositionally biased stretch (acidic residues) spans 19-28 (EGTEEEDGGE). A Phosphothreonine modification is found at Thr-21. Arg-38 is modified (asymmetric dimethylarginine; by autocatalysis). An SAM-dependent MTase PRMT-type domain is found at 44–374 (DQLYYQCYSD…EEKTKDFAME (331 aa)). The S-adenosyl-L-methionine site is built by His-57, Arg-66, Gly-90, Glu-112, and Glu-141. Residues Glu-155 and Glu-164 contribute to the active site.

Belongs to the class I-like SAM-binding methyltransferase superfamily. Protein arginine N-methyltransferase family. PRMT6 subfamily. As to quaternary structure, interacts with (and methylates) HIV-1 Tat, Rev and Nucleocapsid protein p7 (NC). Interacts with EPB41L3 and NCOA1. In terms of processing, automethylation enhances its stability.

It localises to the nucleus. The catalysed reaction is L-arginyl-[protein] + 2 S-adenosyl-L-methionine = N(omega),N(omega)-dimethyl-L-arginyl-[protein] + 2 S-adenosyl-L-homocysteine + 2 H(+). Its function is as follows. Arginine methyltransferase that can catalyze the formation of both omega-N monomethylarginine (MMA) and asymmetrical dimethylarginine (aDMA), with a strong preference for the formation of aDMA. Preferentially methylates arginyl residues present in a glycine and arginine-rich domain and displays preference for monomethylated substrates. Specifically mediates the asymmetric dimethylation of histone H3 'Arg-2' to form H3R2me2a. H3R2me2a represents a specific tag for epigenetic transcriptional repression and is mutually exclusive with methylation on histone H3 'Lys-4' (H3K4me2 and H3K4me3). Acts as a transcriptional repressor of various genes such as HOXA2, THBS1 and TP53. Repression of TP53 blocks cellular senescence. Also methylates histone H2A and H4 'Arg-3' (H2AR3me and H4R3me, respectively). Acts as a regulator of DNA base excision during DNA repair by mediating the methylation of DNA polymerase beta (POLB), leading to the stimulation of its polymerase activity by enhancing DNA binding and processivity. Methylates HMGA1. Regulates alternative splicing events. Acts as a transcriptional coactivator of a number of steroid hormone receptors including ESR1, ESR2, PGR and NR3C1. Promotes fasting-induced transcriptional activation of the gluconeogenic program through methylation of the CRTC2 transcription coactivator. Methylates GPS2, protecting GPS2 from ubiquitination and degradation. Methylates SIRT7, inhibiting SIRT7 histone deacetylase activity and promoting mitochondria biogenesis. This Bos taurus (Bovine) protein is Protein arginine N-methyltransferase 6 (PRMT6).